The following is a 474-amino-acid chain: Shufflon protein A (474 aa).

Positions 1–361 are constant region; it reads MKKYDRGWAS…TGAILSCQSG (361 aa). Residues 362 to 474 are variable region; that stretch reads TWKTSGSLNG…GVFSVFGYQT (113 aa).

This chain is Shufflon protein A, found in Escherichia coli.